A 342-amino-acid chain; its full sequence is MSDQLEASIKNILEQKTLKWIFVGGKGGVGKTTCSCSLAAQLSKVRERVLLISTDPAHNISDAFSQKFTKTPTLVEGFKNLFAMEIDSNPNGEGVEMGNIEEMLQNAAQNEGGSGGFSMGKDFLQSFAGGLPGIDEAMSFGEMIKLIDSLDFDVVVFDTAPTGHTLRLLQFPTLLEKVFTKILSLQGMFGPMMNQFGGMFGMGGGSMNEMIEKMTTTLESVKKMNAQFKDPNCTTFVCVCIAEFLSLYETERLIQELSKQGIDTHNIIVNQLLFPDTDANGTVSCRKCASRQAIQSKYLTDIDELYEDFHVVKLPLLEAEVRGGPAILQFSERMVDPEANKN.

26–33 is a binding site for ATP; that stretch reads KGGVGKTT. Asp-55 is a catalytic residue. Residues Glu-243 and Asn-270 each contribute to the ATP site. 2 residues coordinate Zn(2+): Cys-285 and Cys-288.

This sequence belongs to the arsA ATPase family. Homodimer.

It localises to the cytoplasm. The protein resides in the endoplasmic reticulum. Functionally, ATPase required for the post-translational delivery of tail-anchored (TA) proteins to the endoplasmic reticulum. Recognizes and selectively binds the transmembrane domain of TA proteins in the cytosol. This complex then targets to the endoplasmic reticulum by membrane-bound receptors, where the tail-anchored protein is released for insertion. This process is regulated by ATP binding and hydrolysis. ATP binding drives the homodimer towards the closed dimer state, facilitating recognition of newly synthesized TA membrane proteins. ATP hydrolysis is required for insertion. Subsequently, the homodimer reverts towards the open dimer state, lowering its affinity for the membrane-bound receptor, and returning it to the cytosol to initiate a new round of targeting. May be involved in insulin signaling. The sequence is that of ATPase asna-1 from Caenorhabditis elegans.